The primary structure comprises 253 residues: Small ribosomal subunit protein uS3 (253 aa).

The KH type-2 domain maps to 38-106 (IRKYIHARLS…EVQINIFEIK (69 aa)). The tract at residues 216–253 (AGMDKKQAGQGGGKGGDSPRGDRKPFNKGGKPDARKRK) is disordered. Residues 232-253 (DSPRGDRKPFNKGGKPDARKRK) show a composition bias toward basic and acidic residues.

It belongs to the universal ribosomal protein uS3 family. Part of the 30S ribosomal subunit. Forms a tight complex with proteins S10 and S14.

Its function is as follows. Binds the lower part of the 30S subunit head. Binds mRNA in the 70S ribosome, positioning it for translation. This Flavobacterium psychrophilum (strain ATCC 49511 / DSM 21280 / CIP 103535 / JIP02/86) protein is Small ribosomal subunit protein uS3.